Here is an 845-residue protein sequence, read N- to C-terminus: Protein P (845 aa).

The terminal protein domain (TP) stretch occupies residues 1–179 (MPLSYQHFLK…FCGSPYSWEQ (179 aa)). The interval 180-348 (ELHHGRLVTK…YCLSHLVNLL (169 aa)) is spacer. Disordered regions lie at residues 188–211 (TKTS…SRSS) and 288–317 (YSHL…ARSQ). Composition is skewed to polar residues over residues 199 to 211 (VCSQ…SRSS) and 290 to 301 (HLSTSKRQSSSG). Residues 349–692 (EDWGPCTDHG…YMNLYPVARQ (344 aa)) are polymerase/reverse transcriptase domain (RT). The region spanning 359-602 (EHHIRIPRTP…YSLNFMGYII (244 aa)) is the Reverse transcriptase domain. Mg(2+) contacts are provided by Asp431, Asp553, and Asp554.

It belongs to the hepadnaviridae P protein family.

It carries out the reaction DNA(n) + a 2'-deoxyribonucleoside 5'-triphosphate = DNA(n+1) + diphosphate. It catalyses the reaction Endonucleolytic cleavage to 5'-phosphomonoester.. Its activity is regulated as follows. Activated by host HSP70 and HSP40 in vitro to be able to bind the epsilon loop of the pgRNA. Because deletion of the RNase H region renders the protein partly chaperone-independent, the chaperones may be needed indirectly to relieve occlusion of the RNA-binding site by this domain. Inhibited by several reverse-transcriptase inhibitors: Lamivudine, Adefovir and Entecavir. In terms of biological role, multifunctional enzyme that converts the viral RNA genome into dsDNA in viral cytoplasmic capsids. This enzyme displays a DNA polymerase activity that can copy either DNA or RNA templates, and a ribonuclease H (RNase H) activity that cleaves the RNA strand of RNA-DNA heteroduplexes in a partially processive 3'- to 5'-endonucleasic mode. Neo-synthesized pregenomic RNA (pgRNA) are encapsidated together with the P protein, and reverse-transcribed inside the nucleocapsid. Initiation of reverse-transcription occurs first by binding the epsilon loop on the pgRNA genome, and is initiated by protein priming, thereby the 5'-end of (-)DNA is covalently linked to P protein. Partial (+)DNA is synthesized from the (-)DNA template and generates the relaxed circular DNA (RC-DNA) genome. After budding and infection, the RC-DNA migrates in the nucleus, and is converted into a plasmid-like covalently closed circular DNA (cccDNA). The activity of P protein does not seem to be necessary for cccDNA generation, and is presumably released from (+)DNA by host nuclear DNA repair machinery. The protein is Protein P of Homo sapiens (Human).